Consider the following 233-residue polypeptide: 7-cyano-7-deazaguanine synthase (233 aa).

7–17 (LSGGLDSAVTS) contacts ATP. 4 residues coordinate Zn(2+): Cys195, Cys206, Cys209, and Cys212.

Belongs to the QueC family. Zn(2+) serves as cofactor.

It carries out the reaction 7-carboxy-7-deazaguanine + NH4(+) + ATP = 7-cyano-7-deazaguanine + ADP + phosphate + H2O + H(+). The protein operates within purine metabolism; 7-cyano-7-deazaguanine biosynthesis. In terms of biological role, catalyzes the ATP-dependent conversion of 7-carboxy-7-deazaguanine (CDG) to 7-cyano-7-deazaguanine (preQ(0)). The protein is 7-cyano-7-deazaguanine synthase of Methanococcus maripaludis (strain C5 / ATCC BAA-1333).